Reading from the N-terminus, the 282-residue chain is Undecaprenyl-diphosphatase (282 aa).

6 helical membrane passes run 90-110 (YWLG…GLVC), 121-141 (LWVV…AEYV), 165-185 (LALI…LFLG), 194-214 (FGFL…IPDA), 228-248 (QLLV…SWLL), and 256-276 (LYWF…LLAV).

The protein belongs to the UppP family.

The protein resides in the cell membrane. The catalysed reaction is di-trans,octa-cis-undecaprenyl diphosphate + H2O = di-trans,octa-cis-undecaprenyl phosphate + phosphate + H(+). Functionally, catalyzes the dephosphorylation of undecaprenyl diphosphate (UPP). Confers resistance to bacitracin. In Mycobacterium leprae (strain Br4923), this protein is Undecaprenyl-diphosphatase.